A 183-amino-acid polypeptide reads, in one-letter code: MEEDVINILKSIGEDPTREGLLNTPKRVKKAYEFLTSGYRADITKIVNGAIFEEPTEGMVLVRDIEMYSLCEHHLLPFYGKAHVAYLPNKKIIGISKIPRIVDVFARRLQVQERLTEQIAYAIQEVLDPQGVAVVIKAKHLCMMMRGVEKQNSELFTSCMLGAFKENMVTRSEFLDLIRTGST.

The Zn(2+) site is built by C71, H74, and C142.

It belongs to the GTP cyclohydrolase I family. In terms of assembly, toroid-shaped homodecamer, composed of two pentamers of five dimers.

The catalysed reaction is GTP + H2O = 7,8-dihydroneopterin 3'-triphosphate + formate + H(+). Its pathway is cofactor biosynthesis; 7,8-dihydroneopterin triphosphate biosynthesis; 7,8-dihydroneopterin triphosphate from GTP: step 1/1. The chain is GTP cyclohydrolase 1 from Leptospira interrogans serogroup Icterohaemorrhagiae serovar copenhageni (strain Fiocruz L1-130).